The following is a 69-amino-acid chain: Putative defensin-like protein 312 (69 aa).

The signal sequence occupies residues 1–19 (MSCFSFLVYFLLFIVTKMS). Residues Cys-45 and Cys-57 are joined by a disulfide bond.

Belongs to the DEFL family.

Its subcellular location is the secreted. The polypeptide is Putative defensin-like protein 312 (Arabidopsis thaliana (Mouse-ear cress)).